A 179-amino-acid chain; its full sequence is Crossover junction endodeoxyribonuclease RuvC (179 aa).

Catalysis depends on residues Asp-7, Glu-67, and Asp-139. Residues Asp-7, Glu-67, and Asp-139 each coordinate Mg(2+).

The protein belongs to the RuvC family. In terms of assembly, homodimer which binds Holliday junction (HJ) DNA. The HJ becomes 2-fold symmetrical on binding to RuvC with unstacked arms; it has a different conformation from HJ DNA in complex with RuvA. In the full resolvosome a probable DNA-RuvA(4)-RuvB(12)-RuvC(2) complex forms which resolves the HJ. It depends on Mg(2+) as a cofactor.

The protein resides in the cytoplasm. It carries out the reaction Endonucleolytic cleavage at a junction such as a reciprocal single-stranded crossover between two homologous DNA duplexes (Holliday junction).. Its function is as follows. The RuvA-RuvB-RuvC complex processes Holliday junction (HJ) DNA during genetic recombination and DNA repair. Endonuclease that resolves HJ intermediates. Cleaves cruciform DNA by making single-stranded nicks across the HJ at symmetrical positions within the homologous arms, yielding a 5'-phosphate and a 3'-hydroxyl group; requires a central core of homology in the junction. The consensus cleavage sequence is 5'-(A/T)TT(C/G)-3'. Cleavage occurs on the 3'-side of the TT dinucleotide at the point of strand exchange. HJ branch migration catalyzed by RuvA-RuvB allows RuvC to scan DNA until it finds its consensus sequence, where it cleaves and resolves the cruciform DNA. In Sorangium cellulosum (strain So ce56) (Polyangium cellulosum (strain So ce56)), this protein is Crossover junction endodeoxyribonuclease RuvC.